Consider the following 938-residue polypeptide: Inner tegument protein (938 aa).

The interaction with large tegument protein stretch occupies residues 457 to 938; sequence EIVDLLFSST…LVEPLLLKLG (482 aa).

The protein belongs to the herpesviridae inner tegument protein family. As to quaternary structure, interacts (via C-terminus) with the large tegument protein/LTP (via N-terminus).

It localises to the virion tegument. The protein resides in the host cytoplasm. The protein localises to the host nucleus. Its subcellular location is the host Golgi apparatus. It is found in the host trans-Golgi network. Plays an essential role in cytoplasmic secondary envelopment during viral egress. Interacts with the capsid via the large tegument protein/LTP and participates in its transport to the host trans-Golgi network (TGN) where secondary envelopment occurs. Modulates tegumentation and capsid accumulation at the viral assembly complex. The polypeptide is Inner tegument protein (U30) (Human herpesvirus 7 (strain JI) (HHV-7)).